The sequence spans 452 residues: Pup--protein ligase (452 aa).

Position 9 (Glu9) interacts with Mg(2+). Arg53 contributes to the ATP binding site. A Mg(2+)-binding site is contributed by Tyr55. Residue Asp57 is the Proton acceptor of the active site. Glu63 is a binding site for Mg(2+). The ATP site is built by Thr66 and Trp419.

Belongs to the Pup ligase/Pup deamidase family. Pup-conjugating enzyme subfamily.

It catalyses the reaction ATP + [prokaryotic ubiquitin-like protein]-L-glutamate + [protein]-L-lysine = ADP + phosphate + N(6)-([prokaryotic ubiquitin-like protein]-gamma-L-glutamyl)-[protein]-L-lysine.. The protein operates within protein degradation; proteasomal Pup-dependent pathway. It functions in the pathway protein modification; protein pupylation. In terms of biological role, catalyzes the covalent attachment of the prokaryotic ubiquitin-like protein modifier Pup to the proteasomal substrate proteins, thereby targeting them for proteasomal degradation. This tagging system is termed pupylation. The ligation reaction involves the side-chain carboxylate of the C-terminal glutamate of Pup and the side-chain amino group of a substrate lysine. This is Pup--protein ligase from Nocardia farcinica (strain IFM 10152).